The sequence spans 473 residues: Sulfate adenylyltransferase subunit 1 (473 aa).

The 220-residue stretch at 19 to 238 (KTLLKFLTCG…IKIKNSISSE (220 aa)) folds into the tr-type G domain. The segment at 28 to 35 (GSVDDGKS) is G1. Residue 28–35 (GSVDDGKS) coordinates GTP. Positions 86-90 (GITID) are G2. The interval 107–110 (DTPG) is G3. GTP-binding positions include 107–111 (DTPGH) and 162–165 (NKMD). The segment at 162-165 (NKMD) is G4. Residues 200–202 (SAL) form a G5 region.

This sequence belongs to the TRAFAC class translation factor GTPase superfamily. Classic translation factor GTPase family. CysN/NodQ subfamily. Heterodimer composed of CysD, the smaller subunit, and CysN.

The enzyme catalyses sulfate + ATP + H(+) = adenosine 5'-phosphosulfate + diphosphate. It functions in the pathway sulfur metabolism; hydrogen sulfide biosynthesis; sulfite from sulfate: step 1/3. Functionally, with CysD forms the ATP sulfurylase (ATPS) that catalyzes the adenylation of sulfate producing adenosine 5'-phosphosulfate (APS) and diphosphate, the first enzymatic step in sulfur assimilation pathway. APS synthesis involves the formation of a high-energy phosphoric-sulfuric acid anhydride bond driven by GTP hydrolysis by CysN coupled to ATP hydrolysis by CysD. This Buchnera aphidicola subsp. Acyrthosiphon pisum (strain Tuc7) protein is Sulfate adenylyltransferase subunit 1.